Reading from the N-terminus, the 91-residue chain is UPF0250 protein BB0170 (91 aa).

This sequence belongs to the UPF0250 family.

The protein is UPF0250 protein BB0170 of Bordetella bronchiseptica (strain ATCC BAA-588 / NCTC 13252 / RB50) (Alcaligenes bronchisepticus).